The following is a 98-amino-acid chain: NADH-ubiquinone oxidoreductase chain 4L (98 aa).

3 helical membrane passes run Met1–Val21, His25–Thr45, and Ser57–Val79.

This sequence belongs to the complex I subunit 4L family. As to quaternary structure, core subunit of respiratory chain NADH dehydrogenase (Complex I) which is composed of 45 different subunits.

The protein resides in the mitochondrion inner membrane. It carries out the reaction a ubiquinone + NADH + 5 H(+)(in) = a ubiquinol + NAD(+) + 4 H(+)(out). Functionally, core subunit of the mitochondrial membrane respiratory chain NADH dehydrogenase (Complex I) which catalyzes electron transfer from NADH through the respiratory chain, using ubiquinone as an electron acceptor. Part of the enzyme membrane arm which is embedded in the lipid bilayer and involved in proton translocation. This chain is NADH-ubiquinone oxidoreductase chain 4L (MT-ND4L), found in Dasyurus hallucatus (Northern quoll).